The primary structure comprises 753 residues: Synaptotagmin-like protein 5 (753 aa).

The RabBD domain occupies 7–123; it reads FINLSFLLDH…IISGEWFLEE (117 aa). The FYVE-type zinc-finger motif lies at 64 to 106; that stretch reads CVHCHKTLGLIFDRGDPCQACSLRVCSECRVTGLDGSWKCTVC. Disordered regions lie at residues 145-279, 297-359, and 380-404; these read RRSP…SREH, LTKS…LNSL, and LASG…VPDA. A Phosphoserine modification is found at serine 147. A compositionally biased stretch (polar residues) spans 150–174; sequence SEETQNQEQAQQCVDKSDTLSSVRQ. The span at 195-206 shows a compositional bias: basic and acidic residues; the sequence is TRGEIRTPKPES. Residues 214 to 223 show a composition bias toward polar residues; it reads LDSQNLQSFK. Residues 224-237 are compositionally biased toward low complexity; the sequence is SASGSDRGSTTSSD. A compositionally biased stretch (polar residues) spans 249–275; it reads KSSYSNGGIPVTQRSPVPSAHSVTSIN. A compositionally biased stretch (polar residues) spans 380–391; sequence LASGLSTNSQAG. C2 domains are found at residues 429-550 and 597-717; these read VTGE…DEWF and KRGK…VDWM.

Binds RAB27A that has been activated by GTP-binding.

The protein resides in the membrane. May act as Rab effector protein and play a role in vesicle trafficking. Binds phospholipids. The sequence is that of Synaptotagmin-like protein 5 (Sytl5) from Mus musculus (Mouse).